Here is a 1270-residue protein sequence, read N- to C-terminus: Microtubule-associated tumor suppressor 1 homolog (1270 aa).

A compositionally biased stretch (acidic residues) spans 1–14 (MTDDNSDDKIEDEL). Disordered regions lie at residues 1–50 (MTDD…NSAN), 183–217 (SFHTAGSLPPTGRRSGNTSSLSYSTWTSSHSDKMH), and 374–402 (TEDTQMVTKGKDSGTQNHTSELILSSPPG). A compositionally biased stretch (low complexity) spans 39–50 (SSASSVNWNSAN). The residue at position 186 (T186) is a Phosphothreonine. The segment covering 200 to 211 (TSSLSYSTWTSS) has biased composition (low complexity). Residues S386, S399, and S443 each carry the phosphoserine modification. Polar residues predominate over residues 386–396 (SGTQNHTSELI). Disordered stretches follow at residues 524–558 (DAALSKVTPRPQLTSASSPSSAISRQPTVLSRTPR) and 592–622 (THSKNASHRVPRTTSAVKSNQEDVDKASSSN). Residues 538-547 (SASSPSSAIS) show a composition bias toward low complexity. Residue S629 is modified to Phosphoserine. Polar residues-rich tracts occupy residues 701-710 (SKTTTTSGRN), 759-776 (VSSSGKPTSLKTAQSSWV), and 797-816 (TGSTPSIASTHSELSTYSNN). The disordered stretch occupies residues 701-816 (SKTTTTSGRN…HSELSTYSNN (116 aa)). A coiled-coil region spans residues 940 to 1231 (IQHLLSEREE…RLSMENEELL (292 aa)). 8 positions are modified to phosphoserine: S1203, S1224, S1245, S1255, S1259, S1261, S1264, and S1268. Positions 1237–1270 (GDLCSPKRSPTSSAIPFQSPRNSGSFPSPSISPR) are disordered. Positions 1244 to 1270 (RSPTSSAIPFQSPRNSGSFPSPSISPR) are enriched in polar residues.

The protein belongs to the MTUS1 family. In terms of assembly, homodimer. Interacts with AGTR2. Interacts with PTPN6. Associates with microtubules.

Its subcellular location is the mitochondrion. The protein resides in the golgi apparatus. The protein localises to the cell membrane. It localises to the nucleus. Cooperates with AGTR2 to inhibit ERK2 activation and cell proliferation. May be required for AGTR2 cell surface expression. Together with PTPN6, induces UBE2V2 expression upon angiotensin-II stimulation. The protein is Microtubule-associated tumor suppressor 1 homolog (MTUS1) of Pongo abelii (Sumatran orangutan).